The primary structure comprises 575 residues: Reverse gyrse subunit B (575 aa).

Residues 1–39 (MKIYYNNVCPNCSGRISNERLIKGLPCENDYPYEEGTIE) form an RG N-terminal-type; degenerate zinc finger. ATP-binding positions include Q83 and 100–107 (APTGMGKT). The 161-residue stretch at 87-247 (FIRAYKGYSF…KLKISGKDLE (161 aa)) folds into the Helicase ATP-binding domain. A DEAD box motif is present at residues 204–207 (DDVD). Positions 316–465 (QTLELIKKLG…ALKMVEEAIE (150 aa)) constitute a Helicase C-terminal domain.

Belongs to the DEAD box helicase family. DDVD subfamily. Heterodimer of an RgyA and RgyB subunit.

The protein localises to the cytoplasm. It carries out the reaction ATP + H2O = ADP + phosphate + H(+). Its function is as follows. Modifies the topological state of DNA by introducing positive supercoils in an ATP-dependent process. Binds to single-stranded DNA, transiently cleaves and then rejoins the end, introducing a positive supercoil in the process. The scissile phosphodiester is attacked by the catalytic tyrosine of the enzyme, resulting in the formation of a DNA-(5'-phosphotyrosyl)-enzyme intermediate. Probably involved in rewinding DNA strands in regions of the chromosome that have opened up to allow replication, transcription, DNA repair or for DNA protection. Reconstituted holoenzyme binds dsDNA a bit better than ssDNA, this subunit preferentially binds dsDNA. In isolation this subunit has DNA-stimulated ATPase activity that is stimulated by topoisomerase-domain containing RgyA. This subunit inhibits the relaxation activity of the topoisomerase subunit while promoting positive supercoiling. The chain is Reverse gyrse subunit B from Nanoarchaeum equitans (strain Kin4-M).